We begin with the raw amino-acid sequence, 191 residues long: MAQLYYKYGTMNSGKTIEILKVAHNYEEQGKGVVIMTSAVDTRDGVGYVSSRIGMKRQAMAIEDDTDILGYIKNLPEKPYCILIDEAQFLKRHHVYDLARVVDELDVPVMAFGLKNDFRNELFEGSKHLLLLADKIEEIKTICQYCSRKATMVLRTDHGKPVYDGEQIQIGGNETYIPVCRKHYFKPDINN.

ATP is bound by residues 9–16 (GTMNSGKT) and 85–88 (DEAQ). Catalysis depends on Glu86, which acts as the Proton acceptor. Zn(2+) is bound by residues Cys143, Cys146, Cys180, and His183.

It belongs to the thymidine kinase family. In terms of assembly, homotetramer.

Its subcellular location is the cytoplasm. The enzyme catalyses thymidine + ATP = dTMP + ADP + H(+). The protein is Thymidine kinase of Streptococcus gordonii (strain Challis / ATCC 35105 / BCRC 15272 / CH1 / DL1 / V288).